Reading from the N-terminus, the 180-residue chain is Putative adenylate kinase (180 aa).

Gly10, Gly12, Lys13, Thr14, and Thr15 together coordinate ATP. The NMP stretch occupies residues 30 to 50; sequence NLRDFALEKGCGREVDGEVEV. An LID region spans residues 99 to 109; that stretch reads ERGYSKEKIGE. Residues Arg100 and Lys138 each coordinate ATP.

It belongs to the adenylate kinase family. AK6 subfamily. As to quaternary structure, interacts with uS11. Not a structural component of 40S pre-ribosomes, but transiently interacts with them by binding to uS11.

The catalysed reaction is AMP + ATP = 2 ADP. It carries out the reaction ATP + H2O = ADP + phosphate + H(+). Functionally, broad-specificity nucleoside monophosphate (NMP) kinase that catalyzes the reversible transfer of the terminal phosphate group between nucleoside triphosphates and monophosphates. Also has ATPase activity. Involved in the late maturation steps of the 30S ribosomal particles, specifically 16S rRNA maturation. While NMP activity is not required for ribosome maturation, ATPase activity is. Associates transiently with small ribosomal subunit protein uS11. ATP hydrolysis breaks the interaction with uS11. May temporarily remove uS11 from the ribosome to enable a conformational change of the ribosomal RNA that is needed for the final maturation step of the small ribosomal subunit. This Pyrococcus abyssi (strain GE5 / Orsay) protein is Putative adenylate kinase.